We begin with the raw amino-acid sequence, 85 residues long: Small ribosomal subunit protein bS20 (85 aa).

Belongs to the bacterial ribosomal protein bS20 family.

Its function is as follows. Binds directly to 16S ribosomal RNA. This is Small ribosomal subunit protein bS20 from Borrelia hermsii (strain HS1 / DAH).